Consider the following 560-residue polypeptide: MSYERKYAEALSRVIGEELTIDQIEALIEKPKHEAHGDLAFPCFQLAKAYRKAPVMIATDIANELNDELFTKVEAAGPYVNVFLSRDVVSKEIINTVLEEKSEYATHEARNETIVTDFSSPNIAKPFSMGHLRSTVIGNAINQIARKNGYDVVGVNHLGDWGTQFGKLMVAYKKWGDEEAVRANPIAELLKLYVHFHEEAKTQPELEDEGRAWFKKLEDGDAEATELWQWFRDESLKEFQKVYDLLGVKFESFNGEAFYNDKMGRVVEMLEAKNLLVESEGAMVVSLEEENLPPCLIKKKDGATLYATRDLAAAIYRYETYNFVQANYVVGGEQALHFKQLFSVLRKLGYDFVDGMHHVPFGLILQEGKKMSTRKGRIVLLEEVLKEAIEKAQANIEQKNPDLANAQDVARMVGVGAVVFHDLKNERINNIEFDLDSMLKFEGETGPYVQYTNARANSLLRKGNYDGSPFTGADDDYSWGVVTMLNAFPHVITRAHERREPSIISRYVLDLAQAFNKYYGHVRVLEEDAGKQSRLALVKAVTLVLTEGLRLLGVEAPEEM.

A 'HIGH' region motif is present at residues 121–131; the sequence is PNIAKPFSMGH.

It belongs to the class-I aminoacyl-tRNA synthetase family. As to quaternary structure, monomer.

The protein resides in the cytoplasm. The catalysed reaction is tRNA(Arg) + L-arginine + ATP = L-arginyl-tRNA(Arg) + AMP + diphosphate. This chain is Arginine--tRNA ligase, found in Exiguobacterium sp. (strain ATCC BAA-1283 / AT1b).